Consider the following 102-residue polypeptide: Protamine-2 (102 aa).

The tract at residues 1–102 (MVRYRMRSLS…RTRRRRCRRH (102 aa)) is disordered. Phosphoserine is present on residues Ser8 and Ser10. Residues 8-17 (SLSERSHEVH) show a composition bias toward basic and acidic residues. Low complexity predominate over residues 18 to 29 (GQQVHGQDQGHN). Residues 39–48 (EHVEVYERTH) are compositionally biased toward basic and acidic residues. Residues 49–102 (GHSHYRRRHCSRRRLHRIHRRRHRSCRRRRRRSCRHRRRHRRGCRTRRRRCRRH) show a composition bias toward basic residues.

This sequence belongs to the protamine P2 family. Interacts with TDRP. Post-translationally, proteolytic processing into mature chains is required for histone eviction during spermatogenesis. Transition proteins (TNP1 and TNP2) are required for processing. As to expression, testis.

It is found in the nucleus. It localises to the chromosome. Functionally, protamines substitute for histones in the chromatin of sperm during the haploid phase of spermatogenesis. They compact sperm DNA into a highly condensed, stable and inactive complex. The protein is Protamine-2 (PRM2) of Macaca mulatta (Rhesus macaque).